We begin with the raw amino-acid sequence, 358 residues long: Membrane-bound lytic murein transglycosylase C (358 aa).

Residues 1 to 16 (MKKILALLVIAPLLIS) form the signal peptide. The N-palmitoyl cysteine moiety is linked to residue Cys-17. Cys-17 carries S-diacylglycerol cysteine lipidation.

Belongs to the transglycosylase Slt family.

Its subcellular location is the cell outer membrane. The enzyme catalyses Exolytic cleavage of the (1-&gt;4)-beta-glycosidic linkage between N-acetylmuramic acid (MurNAc) and N-acetylglucosamine (GlcNAc) residues in peptidoglycan, from either the reducing or the non-reducing ends of the peptidoglycan chains, with concomitant formation of a 1,6-anhydrobond in the MurNAc residue.. Its function is as follows. Murein-degrading enzyme. May play a role in recycling of muropeptides during cell elongation and/or cell division. The polypeptide is Membrane-bound lytic murein transglycosylase C (Serratia proteamaculans (strain 568)).